Here is a 629-residue protein sequence, read N- to C-terminus: Putative polypeptide N-acetylgalactosaminyltransferase 10 (629 aa).

Residues 1-12 (MGLSRYLSRRHH) are Cytoplasmic-facing. A helical; Signal-anchor for type II membrane protein transmembrane segment spans residues 13 to 33 (WVIQYCALLLFLYFIYSYVAV). The Lumenal portion of the chain corresponds to 34 to 629 (SNDAPRLNEE…RQANEHKELE (596 aa)). Residues Asn143 and Asn177 are each glycosylated (N-linked (GlcNAc...) asparagine). Disulfide bonds link Cys154–Cys385, Cys376–Cys454, Cys493–Cys510, Cys539–Cys556, and Cys582–Cys598. The catalytic subdomain A stretch occupies residues 163 to 275 (LPTVSVIFPF…YNWLPPLLDP (113 aa)). Asp204 and Arg236 together coordinate substrate. Mn(2+)-binding residues include Asp259 and His261. Positions 331 to 393 (PFDSPVMAGG…PCSRVAHIYR (63 aa)) are catalytic subdomain B. Position 362 (Trp362) interacts with substrate. His390 is a Mn(2+) binding site. Arg393 provides a ligand contact to substrate. Residues 393-406 (RCKYAPFKNAGMGD) form a flexible loop region. The Ricin B-type lectin domain occupies 526–629 (TRWHDIRPKG…RQANEHKELE (104 aa)).

Belongs to the glycosyltransferase 2 family. GalNAc-T subfamily. Mn(2+) serves as cofactor.

It localises to the golgi apparatus membrane. The enzyme catalyses L-seryl-[protein] + UDP-N-acetyl-alpha-D-galactosamine = a 3-O-[N-acetyl-alpha-D-galactosaminyl]-L-seryl-[protein] + UDP + H(+). The catalysed reaction is L-threonyl-[protein] + UDP-N-acetyl-alpha-D-galactosamine = a 3-O-[N-acetyl-alpha-D-galactosaminyl]-L-threonyl-[protein] + UDP + H(+). The protein operates within protein modification; protein glycosylation. Its function is as follows. May catalyze the initial reaction in O-linked oligosaccharide biosynthesis, the transfer of an N-acetyl-D-galactosamine residue to a serine or threonine residue on the protein receptor. The sequence is that of Putative polypeptide N-acetylgalactosaminyltransferase 10 from Caenorhabditis briggsae.